The following is a 146-amino-acid chain: Basic phospholipase A2 beta-bungarotoxin A2 chain (146 aa).

A signal peptide spans 1 to 19 (MNPAHLLVLSAVCVSLLGA). Positions 20 to 27 (SNIPPQSL) are excised as a propeptide. 6 disulfides stabilise this stretch: cysteine 54-cysteine 145, cysteine 56-cysteine 72, cysteine 71-cysteine 126, cysteine 78-cysteine 119, cysteine 87-cysteine 112, and cysteine 105-cysteine 117. Positions 55, 57, and 59 each coordinate Ca(2+). The active site involves histidine 75. Aspartate 76 contacts Ca(2+). The active site involves aspartate 120.

Belongs to the phospholipase A2 family. Group I subfamily. D49 sub-subfamily. As to quaternary structure, heterodimer; disulfide-linked. The A chain has phospholipase A2 activity and the B chain shows homology with the basic protease inhibitors. Ca(2+) is required as a cofactor. As to expression, expressed by the venom gland.

It localises to the secreted. The catalysed reaction is a 1,2-diacyl-sn-glycero-3-phosphocholine + H2O = a 1-acyl-sn-glycero-3-phosphocholine + a fatty acid + H(+). In terms of biological role, snake venom phospholipase A2 (PLA2) that inhibits neuromuscular transmission by blocking acetylcholine release from the nerve termini. PLA2 catalyzes the calcium-dependent hydrolysis of the 2-acyl groups in 3-sn-phosphoglycerides. This Bungarus flaviceps flaviceps (Red-headed krait) protein is Basic phospholipase A2 beta-bungarotoxin A2 chain.